Reading from the N-terminus, the 160-residue chain is Transcriptional repressor NrdR (160 aa).

A zinc finger spans residues 3–34; the sequence is CPFCGNADTQVVDSRVSEEGDTIRRRRRCLSC. Residues 49–139 form the ATP-cone domain; it reads PSVVKRDGSR…VYKSFEDIGE (91 aa).

This sequence belongs to the NrdR family. Zn(2+) serves as cofactor.

Functionally, negatively regulates transcription of bacterial ribonucleotide reductase nrd genes and operons by binding to NrdR-boxes. The chain is Transcriptional repressor NrdR from Bordetella bronchiseptica (strain ATCC BAA-588 / NCTC 13252 / RB50) (Alcaligenes bronchisepticus).